The sequence spans 260 residues: Phosphate import ATP-binding protein PstB (260 aa).

Positions 14–255 (IETENLNLFY…PKNTKTEEYI (242 aa)) constitute an ABC transporter domain. 46–53 (GPSGCGKS) serves as a coordination point for ATP.

This sequence belongs to the ABC transporter superfamily. Phosphate importer (TC 3.A.1.7) family. The complex is composed of two ATP-binding proteins (PstB), two transmembrane proteins (PstC and PstA) and a solute-binding protein (PstS).

The protein resides in the cell inner membrane. It catalyses the reaction phosphate(out) + ATP + H2O = ADP + 2 phosphate(in) + H(+). Part of the ABC transporter complex PstSACB involved in phosphate import. Responsible for energy coupling to the transport system. The protein is Phosphate import ATP-binding protein PstB of Borreliella afzelii (strain PKo) (Borrelia afzelii).